A 139-amino-acid polypeptide reads, in one-letter code: Gene 39 protein (139 aa).

The sequence is that of Gene 39 protein (39) from Mycobacterium (Mycobacteriophage L5).